Consider the following 739-residue polypeptide: Probable beta-glucosidase L (739 aa).

Positions 1–17 (MQTLFLSLLAAAVTVHA) are cleaved as a signal peptide. N-linked (GlcNAc...) asparagine glycans are attached at residues asparagine 40 and asparagine 224. Aspartate 252 is a catalytic residue. Asparagine 398 carries N-linked (GlcNAc...) asparagine glycosylation.

The protein belongs to the glycosyl hydrolase 3 family.

It localises to the secreted. The enzyme catalyses Hydrolysis of terminal, non-reducing beta-D-glucosyl residues with release of beta-D-glucose.. It participates in glycan metabolism; cellulose degradation. Beta-glucosidases are one of a number of cellulolytic enzymes involved in the degradation of cellulosic biomass. Catalyzes the last step releasing glucose from the inhibitory cellobiose. In Aspergillus fumigatus (strain CBS 144.89 / FGSC A1163 / CEA10) (Neosartorya fumigata), this protein is Probable beta-glucosidase L (bglL).